We begin with the raw amino-acid sequence, 85 residues long: Cell division topological specificity factor (85 aa).

The protein belongs to the MinE family.

Its function is as follows. Prevents the cell division inhibition by proteins MinC and MinD at internal division sites while permitting inhibition at polar sites. This ensures cell division at the proper site by restricting the formation of a division septum at the midpoint of the long axis of the cell. The chain is Cell division topological specificity factor from Shewanella oneidensis (strain ATCC 700550 / JCM 31522 / CIP 106686 / LMG 19005 / NCIMB 14063 / MR-1).